The chain runs to 365 residues: Putative F-box protein At1g31000 (365 aa).

In terms of domain architecture, F-box spans 15–62 (NDSDSVRIDIVIEIVKRLPLKDVSRFLLVSKLWSEIIRSPYFIRSFPF).

The polypeptide is Putative F-box protein At1g31000 (Arabidopsis thaliana (Mouse-ear cress)).